The primary structure comprises 345 residues: Platelet-derived growth factor C (345 aa).

Positions 1–22 (MLLLGLLLLTSALAGQRTGTRA) are cleaved as a signal peptide. Polar residues predominate over residues 24–33 (SNLSSKLQLS). Positions 24–45 (SNLSSKLQLSSDKEQNGVQDPR) are disordered. An N-linked (GlcNAc...) asparagine glycan is attached at asparagine 25. A compositionally biased stretch (basic and acidic residues) spans 34–45 (SDKEQNGVQDPR). A CUB domain is found at 46–163 (HERVVTISGN…PGFCIHYSII (118 aa)). N-linked (GlcNAc...) asparagine glycosylation is present at asparagine 55. 4 cysteine pairs are disulfide-bonded: cysteine 104/cysteine 124, cysteine 250/cysteine 294, cysteine 280/cysteine 335, and cysteine 287/cysteine 337.

The protein belongs to the PDGF/VEGF growth factor family. Homodimer; disulfide-linked. Interacts with PDGFRA homodimers, and with heterodimers formed by PDGFRA and PDGFRB. Interacts (via CUB domain) with PLAT (via kringle domain). In terms of processing, proteolytic removal of the N-terminal CUB domain releasing the core domain is necessary for unmasking the receptor-binding epitopes of the core domain. Cleavage after basic residues in the hinge region (region connecting the CUB and growth factor domains) gives rise to the receptor-binding form. Cleaved by PLAT and PLG. Sumoylated by SUMO1. Post-translationally, N-glycosylated. Mainly expressed in kidney, testis, liver, heart and brain (at protein level). Highly expressed in airway epithelium, interstitial cells and alveolar macrophages in the lung of mice overexpressing IL13. Expressed in the ovaries.

It localises to the cytoplasm. Its subcellular location is the cytosol. The protein resides in the secreted. It is found in the nucleus. The protein localises to the cytoplasmic granule. It localises to the cell membrane. Growth factor that plays an essential role in the regulation of embryonic development, cell proliferation, cell migration, survival and chemotaxis. Potent mitogen and chemoattractant for cells of mesenchymal origin. Required for normal skeleton formation during embryonic development, especially for normal development of the craniofacial skeleton and for normal development of the palate. Required for normal skin morphogenesis during embryonic development. Plays an important role in wound healing, where it appears to be involved in three stages: inflammation, proliferation and remodeling. Plays an important role in angiogenesis and blood vessel development. Involved in fibrotic processes, in which transformation of interstitial fibroblasts into myofibroblasts plus collagen deposition occurs. The CUB domain has mitogenic activity in coronary artery smooth muscle cells, suggesting a role beyond the maintenance of the latency of the PDGF domain. In the nucleus, PDGFC seems to have additional function. In Mus musculus (Mouse), this protein is Platelet-derived growth factor C (Pdgfc).